The sequence spans 1034 residues: Multidrug export protein AcrF (1034 aa).

Topologically, residues 1–9 (MANFFIRRP) are cytoplasmic. The helical transmembrane segment at 10–28 (IFAWVLAIILMMAGALAIL) threads the bilayer. At 29–339 (QLPVAQYPTI…TPFVQLSIHE (311 aa)) the chain is on the periplasmic side. The helical transmembrane segment at 340–359 (VVKTLFEAIMLVFLVMYLFL) threads the bilayer. Residues 360-365 (QNMRAT) are Cytoplasmic-facing. A helical transmembrane segment spans residues 366-385 (LIPTIAVPVVLLGTFAILAA). Topologically, residues 386–391 (FGYSIN) are periplasmic. Residues 392–413 (TLTMFGMVLAIGLLVDDAIVVV) traverse the membrane as a helical segment. Topologically, residues 414-441 (ENVERVMMEDKLPPKEATEKSMSQIQGA) are cytoplasmic. The helical transmembrane segment at 442–460 (LVGIAMVLSAVFIPMAFFG) threads the bilayer. At 461 to 473 (GSTGAIYRQFSIT) the chain is on the periplasmic side. Residues 474-496 (IVSAMALSVLVALILTPALCATL) form a helical membrane-spanning segment. Over 497–537 (LKPVSAEHHENKGGFFGWFNTTFDHSVNHYTNSVGKILGST) the chain is Cytoplasmic. A helical transmembrane segment spans residues 538-556 (GRYLLIYALIVAGMVVLFL). Residues 557-871 (RLPSSFLPEE…SYQERLSGNQ (315 aa)) are Periplasmic-facing. A helical transmembrane segment spans residues 872–891 (APALVAISFVVVFLCLAALY). Over 892–897 (ESWSIP) the chain is Cytoplasmic. Residues 898-917 (VSVMLVVPLGIVGVLLAATL) form a helical membrane-spanning segment. At 918-923 (FNQKND) the chain is on the periplasmic side. A helical membrane pass occupies residues 924 to 945 (VYFMVGLLTTIGLSAKNAILIV). Topologically, residues 946 to 973 (EFAKDLMEKEGKGVVEATLMAVRMRLRP) are cytoplasmic. The chain crosses the membrane as a helical span at residues 974–992 (ILMTSLAFILGVLPLAISN). Residues 993 to 1005 (GAGSGAQNAVGIG) lie on the Periplasmic side of the membrane. Residues 1006–1028 (VMGGMVSATLLAIFFVPVFFVVI) traverse the membrane as a helical segment. At 1029-1034 (RRCFKG) the chain is on the cytoplasmic side.

It belongs to the resistance-nodulation-cell division (RND) (TC 2.A.6) family. As to quaternary structure, part of the tripartite efflux system AcrEF-TolC, which is composed of an inner membrane transporter, AcrF, a periplasmic membrane fusion protein, AcrE, and an outer membrane component, TolC. The complex forms a large protein conduit and can translocate molecules across both the inner and outer membranes.

The protein resides in the cell inner membrane. Its function is as follows. Part of the tripartite efflux system AcrEF-TolC. Involved in the efflux of indole and organic solvents. This chain is Multidrug export protein AcrF (acrF), found in Escherichia coli (strain K12).